A 457-amino-acid chain; its full sequence is Phosphomethylpyrimidine synthase (457 aa).

Substrate contacts are provided by residues N81, M110, Y139, H175, 195 to 197 (SRG), 236 to 239 (DALR), and E275. H279 contributes to the Zn(2+) binding site. A substrate-binding site is contributed by Y302. H343 contacts Zn(2+). [4Fe-4S] cluster-binding residues include C423, C426, and C431.

The protein belongs to the ThiC family. [4Fe-4S] cluster is required as a cofactor.

The enzyme catalyses 5-amino-1-(5-phospho-beta-D-ribosyl)imidazole + S-adenosyl-L-methionine = 4-amino-2-methyl-5-(phosphooxymethyl)pyrimidine + CO + 5'-deoxyadenosine + formate + L-methionine + 3 H(+). Its pathway is cofactor biosynthesis; thiamine diphosphate biosynthesis. Functionally, catalyzes the synthesis of the hydroxymethylpyrimidine phosphate (HMP-P) moiety of thiamine from aminoimidazole ribotide (AIR) in a radical S-adenosyl-L-methionine (SAM)-dependent reaction. This is Phosphomethylpyrimidine synthase from Aquifex aeolicus (strain VF5).